We begin with the raw amino-acid sequence, 259 residues long: Thiazole synthase (259 aa).

Lys-99 serves as the catalytic Schiff-base intermediate with DXP. Residues Gly-161, 187-188, and 209-210 contribute to the 1-deoxy-D-xylulose 5-phosphate site; these read AG and NT.

This sequence belongs to the ThiG family. Homotetramer. Forms heterodimers with either ThiH or ThiS.

Its subcellular location is the cytoplasm. The catalysed reaction is [ThiS sulfur-carrier protein]-C-terminal-Gly-aminoethanethioate + 2-iminoacetate + 1-deoxy-D-xylulose 5-phosphate = [ThiS sulfur-carrier protein]-C-terminal Gly-Gly + 2-[(2R,5Z)-2-carboxy-4-methylthiazol-5(2H)-ylidene]ethyl phosphate + 2 H2O + H(+). It functions in the pathway cofactor biosynthesis; thiamine diphosphate biosynthesis. In terms of biological role, catalyzes the rearrangement of 1-deoxy-D-xylulose 5-phosphate (DXP) to produce the thiazole phosphate moiety of thiamine. Sulfur is provided by the thiocarboxylate moiety of the carrier protein ThiS. In vitro, sulfur can be provided by H(2)S. This chain is Thiazole synthase, found in Nautilia profundicola (strain ATCC BAA-1463 / DSM 18972 / AmH).